The following is a 78-amino-acid chain: Holin (78 aa).

Topologically, residues 1 to 6 (MNSKID) are cytoplasmic. The chain crosses the membrane as a helical span at residues 7–23 (SAIPFIGSLTALISGYS). The Periplasmic portion of the chain corresponds to 24 to 29 (LHEWAS). Residues 30-46 (LFGILFGAVSVWIAYRK) form a helical membrane-spanning segment. Residues 47–78 (YKEDVQARKDELAYKMLVAKIEAKKLGIAIDE) lie on the Cytoplasmic side of the membrane.

The protein resides in the host cell inner membrane. Accumulates harmlessly in the cytoplasmic membrane until it reaches a critical concentration that triggers the formation of nanometer-scale pores (pinholes) causing host cell membrane depolarization and endolysin refolding and release into the periplasmic space. Once the pinholin has permeabilized the host cell membrane, the SAR-endolysin is released into the periplasm and breaks down the peptidoglycan layer. Determines the precise timing of host cell lysis. Participates with the SAR-endolysin and the U-spanin protein in the sequential events which lead to the programmed host cell lysis releasing the mature viral particles from the host cell. The chain is Holin (hol) from Haemophilus influenzae (Bacteriophage HP1).